Here is a 199-residue protein sequence, read N- to C-terminus: NAD(P)H dehydrogenase (quinone) 1 (199 aa).

The 187-residue stretch at 4–190 folds into the Flavodoxin-like domain; that stretch reads VLVLYYSAYG…EAARFQGAHV (187 aa). Residues 10-15 and 78-80 each bind FMN; these read SAYGHI and TRY. Y12 contributes to the NAD(+) binding site. W98 contacts substrate. FMN contacts are provided by residues 113 to 119 and H134; that span reads SSATQHG.

The protein belongs to the WrbA family. It depends on FMN as a cofactor.

The catalysed reaction is a quinone + NADH + H(+) = a quinol + NAD(+). The enzyme catalyses a quinone + NADPH + H(+) = a quinol + NADP(+). This is NAD(P)H dehydrogenase (quinone) 1 from Rhizobium meliloti (strain 1021) (Ensifer meliloti).